The primary structure comprises 770 residues: Signal transducer and activator of transcription 3 (770 aa).

Ala-2 is subject to N-acetylalanine. N6-acetyllysine is present on residues Lys-49 and Lys-87. Positions 150–162 (DVRKRVQDLEQKM) match the Essential for nuclear import motif. An SH2 domain is found at 580–670 (WNEGYIMGFI…DATNILVSPL (91 aa)). An allysine; alternate mark is found at Lys-601, Lys-615, and Lys-631. Residues Lys-601, Lys-615, and Lys-631 each carry the N6-acetyllysine; alternate modification. Tyr-640 is modified (phosphotyrosine; by TYK2). Residue Lys-685 is modified to Allysine; alternate. Lys-685 carries the post-translational modification N6-acetyllysine; alternate. A Phosphotyrosine; by FER and PTK6 modification is found at Tyr-705. Lys-707 is modified (N6-acetyllysine). Position 714 is a phosphothreonine (Thr-714). Ser-727 bears the Phosphoserine; by DYRK2, NLK, NEK6, IRAK1, RPS6KA5, ZIPK/DAPK3 and PKC/PRKCE mark.

Belongs to the transcription factor STAT family. As to quaternary structure, forms a homodimer or a heterodimer with a related family member (at least STAT1). Component of a promoter-binding complex composed of STAT3, NFATC3 and NFATC4; complex formation is enhanced by calcineurin. Interacts with IL31RA, NCOA1, PELP1, SIPAR, SOCS7, STATIP1 and TMF1. Interacts with IL23R in presence of IL23. Interacts (via SH2 domain) with NLK. Interacts with ARL2BP; the interaction is enhanced by LIF and JAK1 expression. Interacts with KPNA4 and KPNA5; KPNA4 may be the primary mediator of nuclear import. Interacts with CAV2; the interaction is increased on insulin-induced tyrosine phosphorylation of CAV2 and leads to STAT3 activation. Interacts with ARL2BP; interaction is enhanced with ARL2. Interacts with NEK6. Binds to CDK9 when activated and nuclear. Interacts with BMX. Interacts with ZIPK/DAPK3. Interacts with PIAS3; the interaction occurs on stimulation by IL6, CNTF or OSM and inhibits the DNA binding activity of STAT3. In prostate cancer cells, interacts with PRKCE and promotes DNA binding activity of STAT3. Interacts with STMN3, antagonizing its microtubule-destabilizing activity. Interacts with the 'Lys-129' acetylated form of BIRC5/survivin. Interacts with FER. Interacts (via SH2 domain) with EIF2AK2/PKR (via the kinase catalytic domain). Interacts with FGFR4. Interacts with INPP5F; the interaction is independent of STAT3 Tyr-705 phosphorylation status. Interacts with OCIAD1 and OCIAD2. Interacts (unphosphorylated or phosphorylated at Ser-727) with PHB1. Interacts and may form heterodimers with NHLH1. Found in a complex with SLC39A6, SLC39A10 and with the 'Ser-727' phosphorylated form of STAT3 throughout mitosis. Interacts (when acetylated) with EP300 (via bromo domain); interaction takes place following STAT3 acetylation by EP300 and promotes enhanceosome assembly. Interacts (when acetylated) with BRD2 (via bromo domain); interaction promotes STAT3 recruitment to chromatin and T-helper Th17 cell differentiation. Interacts with FAM220A/SIPAR; the interaction occurs in both the nucleus and the cytoplasm, is enhanced by IL6 and promotes STAT3 dephosphorylation. Interacts in both unphosphorylated and phosphorylated forms with FAM220A but interacts preferentially in the phosphorylated form in the nucleus. Interacts with PTPN2; the interaction is promoted by FAM220A and leads to STAT3 dephosphorylation which negatively regulates STAT3 transcriptional activator activity. Post-translationally, activated through tyrosine phosphorylation by BMX. Tyrosine phosphorylated in response to IL-6, IL-11, CNTF, LIF, CSF-1, EGF, PDGF, IFN-alpha and OSM. Tyrosine phosphorylated in response to constitutively activated FGFR1, FGFR2, FGFR3 and FGFR4. Phosphorylated on serine upon DNA damage, probably by ATM or ATR. Serine phosphorylation is important for the formation of stable DNA-binding STAT3 homodimers and maximal transcriptional activity. ARL2BP may participate in keeping the phosphorylated state of STAT3 within the nucleus. Tyrosine phosphorylated upon stimulation with EGF. Upon LPS challenge, phosphorylated within the nucleus by IRAK1. Phosphorylated on Ser-727 by RPS6KA5. Dephosphorylation on tyrosine residues by PTPN2 negatively regulates IL6/interleukin-6 signaling. Phosphorylation at Tyr-705 by FER, isoform M2 of PKM (PKM2) or PTK6 leads to an increase of its transcriptional activity. Phosphorylation at Tyr-705 is increased in the presence of calcineurin. Phosphorylation at Tyr-640 by TYK2 negatively regulates transcriptional activity. Acetylated on lysine residues by EP300/p300, promoting its activation. Acetylation at Lys-49 and Lys-87 by EP300/p300 promotes its activation. Acetylation at Lys-87 by EP300/p300 promotes its association with BRD2 and recruitment to chromatin. Deacetylated at Lys-49 and Lys-87 by HDAC1. Acetylation at Lys-685 by EP300/p300 promotes its homodimerization and activation. Deacetylated at Lys-685 by HDAC3. Acetylated on lysine residues by CREBBP. Deacetylation by LOXL3 leads to disrupt STAT3 dimerization and inhibit STAT3 transcription activity. Oxidation of lysine residues to allysine on STAT3 preferentially takes place on lysine residues that are acetylated. In terms of processing, some lysine residues are oxidized to allysine by LOXL3, leading to disrupt STAT3 dimerization and inhibit STAT3 transcription activity. Oxidation of lysine residues to allysine on STAT3 preferentially takes place on lysine residues that are acetylated.

It localises to the cytoplasm. It is found in the nucleus. In terms of biological role, signal transducer and transcription activator that mediates cellular responses to interleukins, KITLG/SCF, LEP and other growth factors. Once activated, recruits coactivators, such as NCOA1 or MED1, to the promoter region of the target gene. May mediate cellular responses to activated FGFR1, FGFR2, FGFR3 and FGFR4. Upon activation of IL6ST/gp130 signaling by interleukin-6 (IL6), binds to the IL6-responsive elements identified in the promoters of various acute-phase protein genes. Activated by IL31 through IL31RA. Acts as a regulator of inflammatory response by regulating differentiation of naive CD4(+) T-cells into T-helper Th17 or regulatory T-cells (Treg): acetylation promotes its transcription activity and cell differentiation while deacetylation and oxidation of lysine residues by LOXL3 inhibits differentiation. Involved in cell cycle regulation by inducing the expression of key genes for the progression from G1 to S phase, such as CCND1. Mediates the effects of LEP on melanocortin production, body energy homeostasis and lactation. May play an apoptotic role by transctivating BIRC5 expression under LEP activation. Cytoplasmic STAT3 represses macroautophagy by inhibiting EIF2AK2/PKR activity. Plays a crucial role in basal beta cell functions, such as regulation of insulin secretion. Following JAK/STAT signaling activation and as part of a complex with NFATC3 and NFATC4, binds to the alpha-beta E4 promoter region of CRYAB and activates transcription in cardiomyocytes. Plays an important role in host defense in methicillin-resistant S.aureus lung infection by regulating the expression of the antimicrobial lectin REG3G. This chain is Signal transducer and activator of transcription 3 (STAT3), found in Bos taurus (Bovine).